A 183-amino-acid chain; its full sequence is MTGRGIPGAVAVHHVAYTVPDLDQAVEFFTEVIGAELAYTLVQDAAGDWMTRKLDVDATATARIAMLRLGPVTNLELFEYAAPDQRRQLPRNSDWGGHHLAIHVADVDAAAEYLRAQPGVRVLGDPETITDGPIAGDRWVYFATPWGMQLELINLPAGAPFEQQTEVRLYQPEGSWSDHRGAS.

In terms of domain architecture, VOC spans 11-155 (AVHHVAYTVP…WGMQLELINL (145 aa)). The a divalent metal cation site is built by His14, Glu76, His99, and Glu151.

Homodimer. A divalent metal cation is required as a cofactor.

It carries out the reaction 2-epi-5-epi-valiolone = 5-epi-valiolone. Its pathway is antibiotic biosynthesis. In terms of biological role, catalyzes the epimerization of 2-epi-5-epi-valiolone to 5-epi-valiolone. Involved in cetoniacytone A biosynthesis. The chain is 2-epi-5-epi-valiolone epimerase from Actinomyces sp.